Consider the following 644-residue polypeptide: Chaperone protein DnaK (644 aa).

Threonine 199 carries the post-translational modification Phosphothreonine; by autocatalysis. Residues 589–644 form a disordered region; it reads QALAEASHKLAEKMYSQGQGPQAGPGEEPSGQSGGTEKPVEGEVVDAEFEEVKNKK. Low complexity predominate over residues 604–619; the sequence is SQGQGPQAGPGEEPSG.

Belongs to the heat shock protein 70 family.

Its function is as follows. Acts as a chaperone. This Nitrosospira multiformis (strain ATCC 25196 / NCIMB 11849 / C 71) protein is Chaperone protein DnaK.